The following is a 398-amino-acid chain: S-adenosylmethionine decarboxylase proenzyme (398 aa).

Catalysis depends on residues glutamate 18 and glutamate 21. Serine 78 (schiff-base intermediate with substrate; via pyruvic acid) is an active-site residue. At serine 78 the chain carries Pyruvic acid (Ser); by autocatalysis. Catalysis depends on cysteine 92, which acts as the Proton donor; for catalytic activity. Residues serine 243 and histidine 256 each act as proton acceptor; for processing activity in the active site.

The protein belongs to the eukaryotic AdoMetDC family. The cofactor is pyruvate. Post-translationally, is synthesized initially as an inactive proenzyme. Formation of the active enzyme involves a self-maturation process in which the active site pyruvoyl group is generated from an internal serine residue via an autocatalytic post-translational modification. Two non-identical subunits are generated from the proenzyme in this reaction, and the pyruvate is formed at the N-terminus of the alpha chain, which is derived from the carboxyl end of the proenzyme. The post-translation cleavage follows an unusual pathway, termed non-hydrolytic serinolysis, in which the side chain hydroxyl group of the serine supplies its oxygen atom to form the C-terminus of the beta chain, while the remainder of the serine residue undergoes an oxidative deamination to produce ammonia and the pyruvoyl group blocking the N-terminus of the alpha chain.

It carries out the reaction S-adenosyl-L-methionine + H(+) = S-adenosyl 3-(methylsulfanyl)propylamine + CO2. It functions in the pathway amine and polyamine biosynthesis; S-adenosylmethioninamine biosynthesis; S-adenosylmethioninamine from S-adenosyl-L-methionine: step 1/1. The polypeptide is S-adenosylmethionine decarboxylase proenzyme (SAMDC) (Oryza sativa subsp. japonica (Rice)).